Consider the following 544-residue polypeptide: Chaperonin GroEL (544 aa).

ATP contacts are provided by residues 29–32 (TLGP), 86–90 (DGTTT), G413, 476–478 (NAA), and D492.

Belongs to the chaperonin (HSP60) family. As to quaternary structure, forms a cylinder of 14 subunits composed of two heptameric rings stacked back-to-back. Interacts with the co-chaperonin GroES.

The protein localises to the cytoplasm. The enzyme catalyses ATP + H2O + a folded polypeptide = ADP + phosphate + an unfolded polypeptide.. Its function is as follows. Together with its co-chaperonin GroES, plays an essential role in assisting protein folding. The GroEL-GroES system forms a nano-cage that allows encapsulation of the non-native substrate proteins and provides a physical environment optimized to promote and accelerate protein folding. The sequence is that of Chaperonin GroEL from Bacillus mycoides (strain KBAB4) (Bacillus weihenstephanensis).